Consider the following 567-residue polypeptide: MMAAVPPGLEPWNRVRIPKAGNRSAVTVQNPGAALDLCIAAVIKECHLVILSLKSQTLDAETDVLCAVLYSNHNRMGRHKPHLALKQVEQCLKRLKNMNLEGSIQDLFELFSSNENQPLTTKVCVVPSQPVVELVLMKVLGACKLLLRLLDCCCKTFLLTVKHLGLQEFIILNLVMVGLVSRLWVLYKGVLKRLILLYEPLFGLLQEVARIQPMPYFKDFTFPSDITEFLGQPYFEAFKKKMPIAFAAKGINKLLNKLFLINEQSPRASEETLLGISKKAKQMKINVQNNVDLGQPVKNKRVFKEESSEFDVRAFCNQLKHKATQETSFDFKCSQSRLKTTKYSSQKVIGTPHAKSFVQRFREAESFTQLSEEIQMAVVWCRSKKLKAQAIFLGNKLLKSNRLKHLEAQGTSLPKKLECIKTSICNHLLRGSGIKTSKHHLRQRRSQNKFLRRQRKPQRKLQSTLLREIQQFSQGTRKSATDTSAKWRLSHCTVHRTDLYPNSKQLLNSGVSMPVIQTKEKMIHENLRGIHENETDSWTVMQINKNSTSGTIKETDDIDDIFALMGV.

At S265 the chain carries Phosphoserine. Residues 437 to 457 (SKHHLRQRRSQNKFLRRQRKP) form a disordered region. The segment at 442–460 (RQRRSQNKFLRRQRKPQRK) is nuclear localization signal.

Belongs to the nepro family.

It localises to the nucleus. The protein resides in the nucleolus. May play a role in cortex development as part of the Notch signaling pathway. Downstream of Notch may repress the expression of proneural genes and inhibit neuronal differentiation thereby maintaining neural progenitors. May also play a role in preimplentation embryo development. This is Nucleolus and neural progenitor protein from Homo sapiens (Human).